The primary structure comprises 787 residues: Probable basic-leucine zipper transcription factor J (787 aa).

Low complexity predominate over residues 18–90 (NSNIHNNTHN…NNTQNTNNGT (73 aa)). Disordered regions lie at residues 18 to 95 (NSNI…LTPL), 153 to 173 (LNLS…NNNP), 186 to 306 (LQSQ…NNNT), 343 to 372 (DSLL…IQTS), 401 to 441 (LSSA…NNSN), and 473 to 507 (ASSE…DEDQ). Composition is skewed to low complexity over residues 186–223 (LQSQ…SSPI), 235–258 (SSPI…STSP), 273–305 (NNNN…LNNN), and 351–366 (NNNN…NNNN). Positions 473–483 (ASSESAQSESS) are enriched in low complexity. One can recognise a bZIP domain in the interval 549 to 612 (ELKKQRRLVK…KALKKQLYSL (64 aa)). The basic motif stretch occupies residues 551–603 (KKQRRLVKNREYASQSRSRRKIYVENIETKLQKTNQDCASIKSQLNSVKEENK). Residues 605 to 612 (LKKQLYSL) are leucine-zipper. Disordered stretches follow at residues 723–747 (SNYI…VVST) and 763–787 (DKEV…SPLN). Over residues 763 to 778 (DKEVPQKCKDSSDLKC) the composition is skewed to basic and acidic residues.

This sequence belongs to the bZIP family.

It localises to the nucleus. Functionally, probable transcriptional regulator. In Dictyostelium discoideum (Social amoeba), this protein is Probable basic-leucine zipper transcription factor J (bzpJ).